The chain runs to 337 residues: Tert-butanol monooxygenase / tert-amyl alcohol desaturase reductase subunit (337 aa).

The FAD-binding FR-type domain maps to 9 to 114; that stretch reads KYPKTALNLR…GHPRNNFPLI (106 aa). The 84-residue stretch at 254 to 337 folds into the 2Fe-2S ferredoxin-type domain; sequence FQIKIASTGT…SKGATLVLDL (84 aa). Positions 288, 293, 296, and 324 each coordinate [2Fe-2S] cluster.

This sequence belongs to the PDR/VanB family. As to quaternary structure, this two-component enzyme is composed of an oxygenase (MdpJ) and a reductase (MdpK). It depends on [2Fe-2S] cluster as a cofactor.

Functionally, reductase component of a two-component system involved in the degradation of tertiary alcohols such as tert-butyl alcohol (TBA) and tert-amyl alcohol (TAA). MdpK probably provides electrons via its [2Fe-2S] iron-sulfur cluster to the MdpJ oxygenase subunit. The polypeptide is Tert-butanol monooxygenase / tert-amyl alcohol desaturase reductase subunit (Aquincola tertiaricarbonis).